The primary structure comprises 124 residues: Small ribosomal subunit protein uS12 (124 aa).

Residue Asp89 is modified to 3-methylthioaspartic acid. At Lys108 the chain carries N6-acetyllysine.

This sequence belongs to the universal ribosomal protein uS12 family. Part of the 30S ribosomal subunit. Contacts proteins S8 and S17. May interact with IF1 in the 30S initiation complex.

With S4 and S5 plays an important role in translational accuracy. Its function is as follows. Interacts with and stabilizes bases of the 16S rRNA that are involved in tRNA selection in the A site and with the mRNA backbone. Located at the interface of the 30S and 50S subunits, it traverses the body of the 30S subunit contacting proteins on the other side and probably holding the rRNA structure together. The combined cluster of proteins S8, S12 and S17 appears to hold together the shoulder and platform of the 30S subunit. The polypeptide is Small ribosomal subunit protein uS12 (Escherichia coli (strain K12 / MC4100 / BW2952)).